A 120-amino-acid chain; its full sequence is Glycine cleavage system H protein (120 aa).

The region spanning 17-99 is the Lipoyl-binding domain; that stretch reads IATVGITSHA…QGAGWFFKLK (83 aa). The residue at position 58 (lysine 58) is an N6-lipoyllysine.

Belongs to the GcvH family. The glycine cleavage system is composed of four proteins: P, T, L and H. It depends on (R)-lipoate as a cofactor.

The glycine cleavage system catalyzes the degradation of glycine. The H protein shuttles the methylamine group of glycine from the P protein to the T protein. This Agrobacterium fabrum (strain C58 / ATCC 33970) (Agrobacterium tumefaciens (strain C58)) protein is Glycine cleavage system H protein.